A 1199-amino-acid polypeptide reads, in one-letter code: Tubulin-specific chaperone D (1199 aa).

Disordered stretches follow at residues methionine 1–alanine 23 and glutamine 337–valine 361. Residues aspartate 14–alanine 23 show a composition bias toward acidic residues. HEAT repeat units follow at residues valine 368 to valine 406, glutamate 603 to leucine 639, alanine 757 to phenylalanine 793, and glycine 1111 to tyrosine 1147.

This sequence belongs to the TBCD family. Found in a complex with at least ARL2, PPP2CB, PPP2R1A, PPP2R2A, PPP2R5E and TBCD. Interacts with PPP2CB. Part of a supercomplex made of cofactors A to E. Cofactors A and D function by capturing and stabilizing tubulin in a quasi-native conformation. Cofactor E binds to the cofactor D-tubulin complex; interaction with cofactor C then causes the release of tubulin polypeptides that are committed to the native state. Interacts with ARL2; interaction is enhanced with the GDP-bound form of ARL2. Does not interact with ARL3, ARL4A and ARL4D. Interacts with beta tubulin. Interacts with TBCE.

The protein localises to the cell junction. It localises to the tight junction. It is found in the lateral cell membrane. Its subcellular location is the cytoplasm. The protein resides in the adherens junction. The protein localises to the cytoskeleton. It localises to the microtubule organizing center. It is found in the centrosome. Tubulin-folding protein implicated in the first step of the tubulin folding pathway and required for tubulin complex assembly. Involved in the regulation of microtubule polymerization or depolymerization, it modulates microtubule dynamics by capturing GTP-bound beta-tubulin (TUBB). Its ability to interact with beta tubulin is regulated via its interaction with ARL2. Acts as a GTPase-activating protein (GAP) for ARL2. Induces microtubule disruption in absence of ARL2. Increases degradation of beta tubulin, when overexpressed in polarized cells. Promotes epithelial cell detachment, a process antagonized by ARL2. Induces tight adherens and tight junctions disassembly at the lateral cell membrane. Required for correct assembly and maintenance of the mitotic spindle, and proper progression of mitosis. Involved in neuron morphogenesis. In Bos taurus (Bovine), this protein is Tubulin-specific chaperone D (TBCD).